We begin with the raw amino-acid sequence, 897 residues long: Schlafen family member 13 (897 aa).

The tract at residues 2 to 355 (EANHCSLGVY…WVEKMMDADP (354 aa)) is n'-domain region. Residues glutamate 208 and glutamate 213 contribute to the active site. Positions 284, 286, and 321 each coordinate Zn(2+). 599-606 (GLPGSGKT) provides a ligand contact to ATP.

This sequence belongs to the Schlafen family. Subgroup III subfamily. The cofactor is Mg(2+).

It is found in the cytoplasm. Endoribonuclease that cleaves tRNAs and rRNAs. Cleaves tRNAs 11 nucleotides from the 3'-terminus at the acceptor stem. Does not act on tRNA(Sec). Able to restrict HIV-1 virus replication; ability to inhibit HIV-1 replication is dependent on endoribonuclease activity. The sequence is that of Schlafen family member 13 from Homo sapiens (Human).